Consider the following 287-residue polypeptide: Glycine--tRNA ligase alpha subunit (287 aa).

This sequence belongs to the class-II aminoacyl-tRNA synthetase family. Tetramer of two alpha and two beta subunits.

The protein resides in the cytoplasm. The catalysed reaction is tRNA(Gly) + glycine + ATP = glycyl-tRNA(Gly) + AMP + diphosphate. The polypeptide is Glycine--tRNA ligase alpha subunit (Campylobacter jejuni (strain RM1221)).